A 455-amino-acid polypeptide reads, in one-letter code: MGLSVVILAAGKGSRMNSNKPKVLQTLAAKTLIEHVVSSVEKLNPDNIVVVTGHLKEQVEDALQGRNITFVYQQQQLGTGHAVLQALPYLKEQKVLILYGDVPLISTEVLENLVDTTNDDDLGVLTAFVENPQGLGRIVRDKFGAVTEIVEEKDANDIQRQIKEINTGIYCVHKNLLQKWLPEIKANNVQKEYYLTDIITFAKADHVSINVTHPINEFEILGVNDRTQLASLERVWQRNVAEKIMAKGVSIADPNRFDVRGNLDVGKDCWIDINVIIKGNVKLGNNVVIGANCILKNCIIEDNVRIKSNSMVDGSIIREGAIVGPFARVRPECDVKEGAVIGNFVEAKKTILGKGSKASHLTYLGDSEIGANCNIGAGVITCNYDGVNKHKTVIGDYAFIGSDSQLIAPVNIGQGATVGAGSTIVKDVPADNLVISRARQRHIDTWQRSVKKTDK.

Residues 1–226 are pyrophosphorylase; the sequence is MGLSVVILAA…EFEILGVNDR (226 aa). UDP-N-acetyl-alpha-D-glucosamine-binding positions include 8 to 11, Lys22, Gln73, 78 to 79, 99 to 101, Gly136, Glu151, Asn166, and Asn224; these read LAAG, GT, and YGD. A Mg(2+)-binding site is contributed by Asp101. Residue Asn224 participates in Mg(2+) binding. Positions 227–247 are linker; that stretch reads TQLASLERVWQRNVAEKIMAK. An N-acetyltransferase region spans residues 248 to 455; sequence GVSIADPNRF…WQRSVKKTDK (208 aa). UDP-N-acetyl-alpha-D-glucosamine is bound by residues Arg330 and Lys348. The active-site Proton acceptor is the His360. The UDP-N-acetyl-alpha-D-glucosamine site is built by Tyr363 and Asn374. Acetyl-CoA-binding positions include Ala377, 383–384, Ser402, Ala420, and Arg437; that span reads NY.

This sequence in the N-terminal section; belongs to the N-acetylglucosamine-1-phosphate uridyltransferase family. The protein in the C-terminal section; belongs to the transferase hexapeptide repeat family. Homotrimer. Requires Mg(2+) as cofactor.

It is found in the cytoplasm. The enzyme catalyses alpha-D-glucosamine 1-phosphate + acetyl-CoA = N-acetyl-alpha-D-glucosamine 1-phosphate + CoA + H(+). It carries out the reaction N-acetyl-alpha-D-glucosamine 1-phosphate + UTP + H(+) = UDP-N-acetyl-alpha-D-glucosamine + diphosphate. It functions in the pathway nucleotide-sugar biosynthesis; UDP-N-acetyl-alpha-D-glucosamine biosynthesis; N-acetyl-alpha-D-glucosamine 1-phosphate from alpha-D-glucosamine 6-phosphate (route II): step 2/2. It participates in nucleotide-sugar biosynthesis; UDP-N-acetyl-alpha-D-glucosamine biosynthesis; UDP-N-acetyl-alpha-D-glucosamine from N-acetyl-alpha-D-glucosamine 1-phosphate: step 1/1. Its pathway is bacterial outer membrane biogenesis; LPS lipid A biosynthesis. Catalyzes the last two sequential reactions in the de novo biosynthetic pathway for UDP-N-acetylglucosamine (UDP-GlcNAc). The C-terminal domain catalyzes the transfer of acetyl group from acetyl coenzyme A to glucosamine-1-phosphate (GlcN-1-P) to produce N-acetylglucosamine-1-phosphate (GlcNAc-1-P), which is converted into UDP-GlcNAc by the transfer of uridine 5-monophosphate (from uridine 5-triphosphate), a reaction catalyzed by the N-terminal domain. The chain is Bifunctional protein GlmU from Francisella tularensis subsp. tularensis (strain FSC 198).